Here is a 477-residue protein sequence, read N- to C-terminus: Probable F-box protein At5g25300 (477 aa).

Residues 346–377 (VDMNKEDSQIEINEKETKINQEHDQSDETQAK) are a coiled coil. In terms of domain architecture, F-box spans 412–458 (SPPWSELPGDILRSVFERLSFVDFQRAKQTCPIKRSKSNCLRLWLIT).

The polypeptide is Probable F-box protein At5g25300 (Arabidopsis thaliana (Mouse-ear cress)).